A 266-amino-acid polypeptide reads, in one-letter code: Undecaprenyl-diphosphatase (266 aa).

A run of 7 helical transmembrane segments spans residues valine 8–isoleucine 28, glutamine 39–phenylalanine 59, tryptophan 87–isoleucine 107, serine 113–valine 133, serine 188–valine 208, methionine 219–leucine 239, and threonine 246–tryptophan 266.

Belongs to the UppP family.

It localises to the cell inner membrane. The enzyme catalyses di-trans,octa-cis-undecaprenyl diphosphate + H2O = di-trans,octa-cis-undecaprenyl phosphate + phosphate + H(+). Functionally, catalyzes the dephosphorylation of undecaprenyl diphosphate (UPP). Confers resistance to bacitracin. This is Undecaprenyl-diphosphatase from Thioalkalivibrio sulfidiphilus (strain HL-EbGR7).